The chain runs to 595 residues: MGKKSRVKTQKSGTGATATVSPKEILNLTSELLQKCSSPAPGPGKEWEEYVQIRTLVEKIRKKQKGLSVTFDGKREDYFPDLMKWASENGASVEGFEMVNFKEEGFGLRATRDIKAEELFLWVPRKLLMTVESAKNSVLGPLYSQDRILQAMGNIALAFHLLCERASPNSFWQPYIQTLPSEYDTPLYFEEEEVRYLQSTQAVHDVFSQYKNTARQYAYFYKVIQTHPHANKLPLKDSFTYEDYRWAVSSVMTRQNQIPTEDGSRVTLALIPLWDMCNHTNGLITTGYNLEDDRCECVALQDFRAGEQIYIFYGTRSNAEFVIHSGFFFDNNSHDRVKIKLGVSKSDRLYAMKAEVLARAGIPTSSVFALHFTEPPISAQLLAFLRVFCMTEEELKEHLLGDNAIDRIFTLGNSEFPVSWDNEVKLWTFLEDRASLLLKTYKTTIEEDKSVLKNQDLSVRAKMAIKLRLGEKEILEKAVKSAAVNREYYRQQMEEKAPLPKYEESNLGLLESSMGDSRLPLVLRNLEEEAGVQDALSIREAISKATATENGLVNGENSIPNGTRSEDENLNQEESKRAVEDAKGSSSDRADAVKE.

The disordered stretch occupies residues 1 to 22 (MGKKSRVKTQKSGTGATATVSP). The span at 10–20 (QKSGTGATATV) shows a compositional bias: polar residues. Residues Arg75, 104 to 106 (EGF), Arg254, 275 to 279 (DMCNH), and 325 to 327 (SGF) each bind S-adenosyl-L-methionine. The SET domain occupies 94–314 (EGFEMVNFKE…AGEQIYIFYG (221 aa)). Ser513 bears the Phosphoserine mark. The segment covering 549 to 563 (ENGLVNGENSIPNGT) has biased composition (polar residues). The tract at residues 549–595 (ENGLVNGENSIPNGTRSEDENLNQEESKRAVEDAKGSSSDRADAVKE) is disordered. Residues 573–595 (EESKRAVEDAKGSSSDRADAVKE) are compositionally biased toward basic and acidic residues.

The protein belongs to the class V-like SAM-binding methyltransferase superfamily. SETD3 actin-histidine methyltransferase family. In terms of assembly, interacts with MYOD1. In terms of processing, phosphorylated by GSK3B, which is required for recognition by the SCF(FBXW7) complex and subsequent degradation. Post-translationally, ubiquitinated by the SCF(FBXW7) complex following phosphorylation by GSK3B, leading to its degradation by the proteasome.

Its subcellular location is the cytoplasm. It localises to the nucleus. It catalyses the reaction L-histidyl-[protein] + S-adenosyl-L-methionine = N(tele)-methyl-L-histidyl-[protein] + S-adenosyl-L-homocysteine + H(+). Functionally, protein-histidine N-methyltransferase that specifically mediates 3-methylhistidine (tele-methylhistidine) methylation of actin at 'His-73'. Histidine methylation of actin is required for smooth muscle contraction of the laboring uterus during delivery. Does not have protein-lysine N-methyltransferase activity and probably only catalyzes histidine methylation of actin. The chain is Actin-histidine N-methyltransferase from Callithrix jacchus (White-tufted-ear marmoset).